Reading from the N-terminus, the 496-residue chain is Hexokinase-2 (496 aa).

A helical membrane pass occupies residues 4–24; that stretch reads ATVGAVVVGTAAAVAVAALIM. The region spanning 35–487 is the Hexokinase domain; it reads ARARAILKEF…SGIGAALLAA (453 aa). The tract at residues 90-228 is hexokinase small subdomain; it reads TGDEGGVFYA…EIDMRVSALV (139 aa). The ADP site is built by G104, T105, and N106. Residues T194, K195, N229, and D230 each coordinate D-glucose. The segment at 229–476 is hexokinase large subdomain; sequence NDTVGTLAGG…TSIVFKHAND (248 aa). An ADP-binding site is contributed by T253. Residues N256, E284, and E315 each coordinate D-glucose. An ADP-binding site is contributed by G441.

Belongs to the hexokinase family.

The protein resides in the plastid. The protein localises to the chloroplast outer membrane. It carries out the reaction a D-hexose + ATP = a D-hexose 6-phosphate + ADP + H(+). The catalysed reaction is D-fructose + ATP = D-fructose 6-phosphate + ADP + H(+). It catalyses the reaction D-glucose + ATP = D-glucose 6-phosphate + ADP + H(+). It functions in the pathway carbohydrate metabolism; hexose metabolism. It participates in carbohydrate degradation; glycolysis; D-glyceraldehyde 3-phosphate and glycerone phosphate from D-glucose: step 1/4. Fructose and glucose phosphorylating enzyme. May be involved in the phosphorylation of glucose during the export from plastids to cytosol. Seems neither to be involved in cell sugar sensing nor in carbohydrate metabolism in tuber. This chain is Hexokinase-2 (HXK2), found in Solanum tuberosum (Potato).